The following is a 236-amino-acid chain: Uridylate kinase (236 aa).

9–12 contributes to the ATP binding site; that stretch reads KFSG. Residues 17 to 22 form an involved in allosteric activation by GTP region; sequence GNSGFG. Glycine 51 provides a ligand contact to UMP. 2 residues coordinate ATP: glycine 52 and arginine 56. UMP contacts are provided by residues aspartate 72 and 133–140; that span reads TGNPFFTT. Positions 160, 166, and 169 each coordinate ATP.

The protein belongs to the UMP kinase family. In terms of assembly, homohexamer.

It localises to the cytoplasm. It catalyses the reaction UMP + ATP = UDP + ADP. It functions in the pathway pyrimidine metabolism; CTP biosynthesis via de novo pathway; UDP from UMP (UMPK route): step 1/1. With respect to regulation, allosterically activated by GTP. Inhibited by UTP. Catalyzes the reversible phosphorylation of UMP to UDP. The chain is Uridylate kinase from Helicobacter hepaticus (strain ATCC 51449 / 3B1).